The following is a 510-amino-acid chain: NAD(P)H-quinone oxidoreductase subunit 2 B, chloroplastic (510 aa).

Helical transmembrane passes span 24-44 (LLLFDGSLIFPECILIFGLIL), 57-77 (LPWFYFISSTSLVMSITALLF), 99-119 (IFQFLILLCSTLCIPLSVEYI), 124-144 (MAITEFLLFVLTATLGGMFLC), 149-169 (LITIFVAPECFSFCSYLLSGY), 183-203 (YLLMGGASSSILVHAFSWLYG), 227-247 (PGISIALLFITVGIGFKLSPA), 295-315 (WHLLLEILAILSMILGNIIAI), 323-343 (MLAYSSIGQIGYVIIGIIVGD), 354-374 (YMLFYISMNLGTFACIVLFGL), 395-415 (ALSLALCLLSLGGLPPLAGFF), 428-448 (GLYSLVLIGLLTSVVSIYYYL), and 484-504 (MIVCVIASTIPGISMNPIIAI).

The protein belongs to the complex I subunit 2 family. As to quaternary structure, NDH is composed of at least 16 different subunits, 5 of which are encoded in the nucleus.

The protein localises to the plastid. It localises to the chloroplast thylakoid membrane. The enzyme catalyses a plastoquinone + NADH + (n+1) H(+)(in) = a plastoquinol + NAD(+) + n H(+)(out). It catalyses the reaction a plastoquinone + NADPH + (n+1) H(+)(in) = a plastoquinol + NADP(+) + n H(+)(out). Functionally, NDH shuttles electrons from NAD(P)H:plastoquinone, via FMN and iron-sulfur (Fe-S) centers, to quinones in the photosynthetic chain and possibly in a chloroplast respiratory chain. The immediate electron acceptor for the enzyme in this species is believed to be plastoquinone. Couples the redox reaction to proton translocation, and thus conserves the redox energy in a proton gradient. The protein is NAD(P)H-quinone oxidoreductase subunit 2 B, chloroplastic of Jasminum nudiflorum (Winter jasmine).